Consider the following 147-residue polypeptide: Small ribosomal subunit protein eS19 (147 aa).

Belongs to the eukaryotic ribosomal protein eS19 family. As to quaternary structure, part of the 30S ribosomal subunit.

Its function is as follows. May be involved in maturation of the 30S ribosomal subunit. In Archaeoglobus fulgidus (strain ATCC 49558 / DSM 4304 / JCM 9628 / NBRC 100126 / VC-16), this protein is Small ribosomal subunit protein eS19.